The following is a 41-amino-acid chain: Large ribosomal subunit protein bL36 (41 aa).

It belongs to the bacterial ribosomal protein bL36 family.

In Rhodopseudomonas palustris (strain BisA53), this protein is Large ribosomal subunit protein bL36.